Reading from the N-terminus, the 199-residue chain is Twist-related protein 1 (199 aa).

Residues 1–18 show a composition bias toward low complexity; the sequence is MMQDVSSSPVSPADDSLS. A disordered region spans residues 1–102; sequence MMQDVSSSPV…GGGSPQSYEE (102 aa). Over residues 34–43 the composition is skewed to basic residues; sequence RGGRKRRSSR. Gly residues-rich tracts occupy residues 46–65 and 80–96; these read AGGG…GGDE and GCGG…GGGS. The bHLH domain occupies 105–156; the sequence is TQRVMANVRERQRTQSLNEAFAALRKIIPTLPSDKLSKIQTLKLAARYIDFL. Residues 158–188 form a sufficient for transactivation activity region; sequence QVLQSDELDSKMASCSYVAHERLSYAFSVWR.

As to quaternary structure, efficient DNA binding requires dimerization with another bHLH protein. Homodimer or heterodimer with E proteins such as TCF3. ID1 binds preferentially to TCF3 but does not interact efficiently with TWIST1 so ID1 levels control the amount of TCF3 available to dimerize with TWIST and thus determine the type of dimer formed.

It is found in the nucleus. Acts as a transcriptional regulator. Inhibits myogenesis by sequestrating E proteins, inhibiting trans-activation by MEF2, and inhibiting DNA-binding by MYOD1 through physical interaction. This interaction probably involves the basic domains of both proteins. Also represses expression of pro-inflammatory cytokines such as TNFA and IL1B. Regulates cranial suture patterning and fusion. Activates transcription as a heterodimer with E proteins. Regulates gene expression differentially, depending on dimer composition. Homodimers induce expression of FGFR2 and POSTN while heterodimers repress FGFR2 and POSTN expression and induce THBS1 expression. Heterodimerization is also required for osteoblast differentiation. Represses the activity of the circadian transcriptional activator: NPAS2-BMAL1 heterodimer. The polypeptide is Twist-related protein 1 (TWIST1) (Microcebus murinus (Gray mouse lemur)).